A 204-amino-acid polypeptide reads, in one-letter code: Tat proofreading chaperone DmsD (204 aa).

This sequence belongs to the TorD/DmsD family. DmsD subfamily.

Its function is as follows. Required for biogenesis/assembly of DMSO reductase, but not for the interaction of the DmsA signal peptide with the Tat system. May be part of a chaperone cascade complex that facilitates a folding-maturation pathway for the substrate protein. The protein is Tat proofreading chaperone DmsD of Escherichia coli O6:H1 (strain CFT073 / ATCC 700928 / UPEC).